We begin with the raw amino-acid sequence, 431 residues long: Glutamate--tRNA ligase 1 (431 aa).

The 'HIGH' region signature appears at 6 to 16 (PSPTGDMHIGN). Positions 235–239 (KMSKR) match the 'KMSKS' region motif. Residue lysine 238 participates in ATP binding.

The protein belongs to the class-I aminoacyl-tRNA synthetase family. Glutamate--tRNA ligase type 1 subfamily. In terms of assembly, monomer.

It is found in the cytoplasm. The catalysed reaction is tRNA(Glu) + L-glutamate + ATP = L-glutamyl-tRNA(Glu) + AMP + diphosphate. Its function is as follows. Catalyzes the attachment of glutamate to tRNA(Glu) in a two-step reaction: glutamate is first activated by ATP to form Glu-AMP and then transferred to the acceptor end of tRNA(Glu). This chain is Glutamate--tRNA ligase 1, found in Campylobacter jejuni (strain RM1221).